Reading from the N-terminus, the 175-residue chain is Large ribosomal subunit protein uL15 (175 aa).

Over residues M1–G13 the composition is skewed to basic and acidic residues. 2 disordered regions span residues M1–S44 and V150–A175. Gly residues predominate over residues R23 to Q37.

This sequence belongs to the universal ribosomal protein uL15 family. As to quaternary structure, part of the 50S ribosomal subunit.

In terms of biological role, binds to the 23S rRNA. The protein is Large ribosomal subunit protein uL15 of Sphingopyxis alaskensis (strain DSM 13593 / LMG 18877 / RB2256) (Sphingomonas alaskensis).